Consider the following 294-residue polypeptide: 4-hydroxy-tetrahydrodipicolinate synthase (294 aa).

T47 is a binding site for pyruvate. The Proton donor/acceptor role is filled by Y135. K163 (schiff-base intermediate with substrate) is an active-site residue. Residue I205 participates in pyruvate binding.

It belongs to the DapA family. In terms of assembly, homotetramer; dimer of dimers.

Its subcellular location is the cytoplasm. It catalyses the reaction L-aspartate 4-semialdehyde + pyruvate = (2S,4S)-4-hydroxy-2,3,4,5-tetrahydrodipicolinate + H2O + H(+). Its pathway is amino-acid biosynthesis; L-lysine biosynthesis via DAP pathway; (S)-tetrahydrodipicolinate from L-aspartate: step 3/4. Catalyzes the condensation of (S)-aspartate-beta-semialdehyde [(S)-ASA] and pyruvate to 4-hydroxy-tetrahydrodipicolinate (HTPA). This is 4-hydroxy-tetrahydrodipicolinate synthase from Rickettsia typhi (strain ATCC VR-144 / Wilmington).